A 460-amino-acid polypeptide reads, in one-letter code: UDP-N-acetylmuramoylalanine--D-glutamate ligase (460 aa).

115-121 lines the ATP pocket; the sequence is GTDGKTT.

Belongs to the MurCDEF family.

The protein resides in the cytoplasm. It catalyses the reaction UDP-N-acetyl-alpha-D-muramoyl-L-alanine + D-glutamate + ATP = UDP-N-acetyl-alpha-D-muramoyl-L-alanyl-D-glutamate + ADP + phosphate + H(+). It participates in cell wall biogenesis; peptidoglycan biosynthesis. Functionally, cell wall formation. Catalyzes the addition of glutamate to the nucleotide precursor UDP-N-acetylmuramoyl-L-alanine (UMA). This is UDP-N-acetylmuramoylalanine--D-glutamate ligase from Chlorobium luteolum (strain DSM 273 / BCRC 81028 / 2530) (Pelodictyon luteolum).